Consider the following 354-residue polypeptide: Serine/threonine-protein kinase ppk34 (354 aa).

The Protein kinase domain occupies 40–331; that stretch reads YRLKNMLGYG…IEELLRDPFL (292 aa). ATP contacts are provided by residues 46–54 and Lys-69; that span reads LGYGACSTV. Catalysis depends on Asp-200, which acts as the Proton acceptor.

Belongs to the protein kinase superfamily. Ser/Thr protein kinase family.

The protein resides in the cytoplasm. It is found in the nucleus. It catalyses the reaction L-seryl-[protein] + ATP = O-phospho-L-seryl-[protein] + ADP + H(+). The catalysed reaction is L-threonyl-[protein] + ATP = O-phospho-L-threonyl-[protein] + ADP + H(+). The sequence is that of Serine/threonine-protein kinase ppk34 (ppk34) from Schizosaccharomyces pombe (strain 972 / ATCC 24843) (Fission yeast).